The chain runs to 330 residues: DNA primase small subunit PriS (330 aa).

Active-site residues include aspartate 101 and aspartate 103. Zn(2+) contacts are provided by cysteine 116, cysteine 119, cysteine 128, and aspartate 131. The active site involves aspartate 235.

This sequence belongs to the eukaryotic-type primase small subunit family. Heterodimer of a small subunit (PriS) and a large subunit (PriL). The cofactor is Mg(2+). Mn(2+) serves as cofactor.

In terms of biological role, catalytic subunit of DNA primase, an RNA polymerase that catalyzes the synthesis of short RNA molecules used as primers for DNA polymerase during DNA replication. The small subunit contains the primase catalytic core and has DNA synthesis activity on its own. Binding to the large subunit stabilizes and modulates the activity, increasing the rate of DNA synthesis while decreasing the length of the DNA fragments, and conferring RNA synthesis capability. The DNA polymerase activity may enable DNA primase to also catalyze primer extension after primer synthesis. May also play a role in DNA repair. This Saccharolobus islandicus (strain Y.N.15.51 / Yellowstone #2) (Sulfolobus islandicus) protein is DNA primase small subunit PriS.